Consider the following 881-residue polypeptide: Sodium/sulfate cotransporter 1 (881 aa).

Helical transmembrane passes span 8-28, 31-51, 61-81, 107-127, 140-160, and 186-206; these read GIVA…DWVG, ITFT…VTVA, GLLT…TGGL, MVLS…PILI, LLIP…IGTS, and IFDI…FILL. RCK C-terminal domains lie at 212–296, 318–402, 407–492, and 498–584; these read LPGN…EYGL, VFSA…IKTN, LHAV…FPGL, and EQVD…DKSF. Helical transmembrane passes span 601-621, 625-645, 658-678, 684-704, 775-795, and 803-823; these read MIIG…GGLK, YIHL…TGCM, VYLT…TGVA, AIIS…AIYI, FAIV…FILV, and VWIV…LYFL. The segment at 854 to 881 is disordered; it reads SLRRQVSHTRTDDSGSSGSPLPAPKIVA.

The protein belongs to the divalent anion:Na+ symporter (DASS) superfamily. Na+/sulfate symporter (TC 2.A.47.4) family.

It localises to the cell membrane. Functionally, na(+)/sulfate cotransporter with a probable high-affinity for sulfate and a proteasome dependent turnover. This is Sodium/sulfate cotransporter 1 (SLT1) from Chlamydomonas reinhardtii (Chlamydomonas smithii).